A 455-amino-acid chain; its full sequence is Bifunctional protein GlmU (455 aa).

The pyrophosphorylase stretch occupies residues 1-227; the sequence is MGLSVIILAA…CEEVQGVNDR (227 aa). UDP-N-acetyl-alpha-D-glucosamine is bound by residues 8 to 11, K22, Q73, 78 to 79, 100 to 102, G137, E152, N167, and N225; these read LAAG, GT, and YGD. D102 contacts Mg(2+). N225 contacts Mg(2+). Residues 228 to 248 form a linker region; the sequence is WELTKLERYYQRLMAKKLSLA. The N-acetyltransferase stretch occupies residues 249–455; it reads GVTIIDPERF…KGWHRPTKKE (207 aa). The UDP-N-acetyl-alpha-D-glucosamine site is built by R332 and K350. H362 acts as the Proton acceptor in catalysis. UDP-N-acetyl-alpha-D-glucosamine contacts are provided by Y365 and N376. Residues A379, 385-386, S404, A422, and R439 each bind acetyl-CoA; that span reads NY.

The protein in the N-terminal section; belongs to the N-acetylglucosamine-1-phosphate uridyltransferase family. In the C-terminal section; belongs to the transferase hexapeptide repeat family. In terms of assembly, homotrimer. It depends on Mg(2+) as a cofactor.

The protein localises to the cytoplasm. It catalyses the reaction alpha-D-glucosamine 1-phosphate + acetyl-CoA = N-acetyl-alpha-D-glucosamine 1-phosphate + CoA + H(+). The enzyme catalyses N-acetyl-alpha-D-glucosamine 1-phosphate + UTP + H(+) = UDP-N-acetyl-alpha-D-glucosamine + diphosphate. Its pathway is nucleotide-sugar biosynthesis; UDP-N-acetyl-alpha-D-glucosamine biosynthesis; N-acetyl-alpha-D-glucosamine 1-phosphate from alpha-D-glucosamine 6-phosphate (route II): step 2/2. The protein operates within nucleotide-sugar biosynthesis; UDP-N-acetyl-alpha-D-glucosamine biosynthesis; UDP-N-acetyl-alpha-D-glucosamine from N-acetyl-alpha-D-glucosamine 1-phosphate: step 1/1. It participates in bacterial outer membrane biogenesis; LPS lipid A biosynthesis. In terms of biological role, catalyzes the last two sequential reactions in the de novo biosynthetic pathway for UDP-N-acetylglucosamine (UDP-GlcNAc). The C-terminal domain catalyzes the transfer of acetyl group from acetyl coenzyme A to glucosamine-1-phosphate (GlcN-1-P) to produce N-acetylglucosamine-1-phosphate (GlcNAc-1-P), which is converted into UDP-GlcNAc by the transfer of uridine 5-monophosphate (from uridine 5-triphosphate), a reaction catalyzed by the N-terminal domain. This chain is Bifunctional protein GlmU, found in Coxiella burnetii (strain Dugway 5J108-111).